Consider the following 186-residue polypeptide: uncharacterized protein (186 aa).

This is an uncharacterized protein from Haemophilus influenzae (strain ATCC 51907 / DSM 11121 / KW20 / Rd).